The following is a 192-amino-acid chain: Imidazole glycerol phosphate synthase subunit HisH (192 aa).

The Glutamine amidotransferase type-1 domain occupies 1–192 (MIAIIDYGLG…QALKGGFIND (192 aa)). Cys77 (nucleophile) is an active-site residue. Catalysis depends on residues His169 and Glu171.

As to quaternary structure, heterodimer of HisH and HisF.

The protein localises to the cytoplasm. The enzyme catalyses 5-[(5-phospho-1-deoxy-D-ribulos-1-ylimino)methylamino]-1-(5-phospho-beta-D-ribosyl)imidazole-4-carboxamide + L-glutamine = D-erythro-1-(imidazol-4-yl)glycerol 3-phosphate + 5-amino-1-(5-phospho-beta-D-ribosyl)imidazole-4-carboxamide + L-glutamate + H(+). The catalysed reaction is L-glutamine + H2O = L-glutamate + NH4(+). It functions in the pathway amino-acid biosynthesis; L-histidine biosynthesis; L-histidine from 5-phospho-alpha-D-ribose 1-diphosphate: step 5/9. In terms of biological role, IGPS catalyzes the conversion of PRFAR and glutamine to IGP, AICAR and glutamate. The HisH subunit catalyzes the hydrolysis of glutamine to glutamate and ammonia as part of the synthesis of IGP and AICAR. The resulting ammonia molecule is channeled to the active site of HisF. This is Imidazole glycerol phosphate synthase subunit HisH from Staphylococcus epidermidis (strain ATCC 12228 / FDA PCI 1200).